The sequence spans 295 residues: Hydroxylase/desaturase efuI (295 aa).

Belongs to the asaB hydroxylase/desaturase family.

Its pathway is secondary metabolite biosynthesis; terpenoid biosynthesis. In terms of biological role, hydroxylase/desaturase; part of the gene cluster that mediates the biosynthesis of enfumafungin, a glycosylated fernene-type triterpenoid with potent antifungal activity, mediated by its interaction with beta-1,3-glucan synthase and the fungal cell wall. The pathway begins with the terpene cyclase-glycosyl transferase fusion protein that most likely uses 2,3-oxidosqualene as substrate and catalyzes glycosylation immediately after cyclization. The fernene glycoside then could be processed by the desaturase efuI which catalyzes isomerization of a double bond established by efuA to form the core structure. The latter would then undergo a series of hydroxylations in unknown order at C-2, C-19, C-23 and C-25, which would be catalyzed by two of the three cytochrome P450 monooxygenases efuB, efuG or efuH. The hydroxy-group at C-25 becomes oxidized by the dehydrogenase efuE to enable a spontaneous, non-enzymatic hemiacetal formation with C-23. After hydroxylation at C-2, acetylation by the acetyltransferase efuC takes place. The final steps in enfumafungin biosynthesis require expansion of the 5-membered ring by lactonization via a Baeyer-Villiger reaction mediated by one of the BGC's cytochrome P450 monooxygenases (efuB, efuG or efuH) followed by ring cleavage. This type of reaction would establish a double bond between C-20 and C-21 which could be reduced by the reductase efuL to form the final product. This chain is Hydroxylase/desaturase efuI, found in Hormonema carpetanum.